We begin with the raw amino-acid sequence, 49 residues long: Large ribosomal subunit protein bL33 (49 aa).

The protein belongs to the bacterial ribosomal protein bL33 family.

In Lachnoclostridium phytofermentans (strain ATCC 700394 / DSM 18823 / ISDg) (Clostridium phytofermentans), this protein is Large ribosomal subunit protein bL33.